Reading from the N-terminus, the 635-residue chain is Paraneoplastic antigen-like protein 8B (635 aa).

Disordered regions lie at residues 115 to 202, 260 to 332, and 492 to 635; these read PTQA…DESL, TDKS…NPEF, and AARE…PKCR. The span at 133–147 shows a compositional bias: polar residues; that stretch reads SETQAQDSGEVTGQA. The segment covering 156–183 has biased composition (basic residues); the sequence is NPRRGRRGRRNRTRRNRLTQKGKKRSRG. Positions 261–273 are enriched in basic and acidic residues; sequence DKSKKEEAEKEPA. Composition is skewed to acidic residues over residues 302–329 and 502–524; these read PDEE…ELDN and GSEE…EASE. Over residues 531–540 the composition is skewed to basic residues; that stretch reads RKPRAKRART. Residues 541-557 are compositionally biased toward low complexity; that stretch reads APRGLTPAGAPPTASGA. Basic residues-rich tracts occupy residues 558–568 and 619–635; these read RKTRAGGRGRG and ARGK…PKCR.

This sequence belongs to the PNMA family.

In Homo sapiens (Human), this protein is Paraneoplastic antigen-like protein 8B.